Consider the following 273-residue polypeptide: MDRNILRSAREDPHRTATDIQMIISSPNEPVPSKRTVRRRLQQAGLHGRKPVKKPFISKKNRMARVAWAKAHLRWGRQEWAKHIWSDESKFNLFGSDGNSWVRRPVGSRYSPKYQCPTVKHGGGSVMVWGCFTSTSMGPLRRIQSIMDRFQYENIFETTMRPWALQNVGRGFVFQQDNDPKHTSLHVRSWFQRRHVHLLDWPSQSPDLNPIEHLWEELERRLGGIRASNADAKFNQLENAWKAIPMSVIHKLIDSMPRRCQAVIDANGYATKY.

It belongs to the transposase 5 family.

The protein resides in the nucleus. Probably essential for transposable element Tc1 transposition. The insertion of Tc1 is the main cause of spontaneous mutations. It is an endonuclease which can produce a single strand nick at the 5'-end of the transposon. The polypeptide is Transposable element Tc1 transposase (tc1a) (Caenorhabditis elegans).